Consider the following 404-residue polypeptide: Propionate kinase (404 aa).

Belongs to the acetokinase family. PduW subfamily.

It localises to the cytoplasm. It carries out the reaction propanoate + ATP = propanoyl phosphate + ADP. Its pathway is polyol metabolism; 1,2-propanediol degradation. In terms of biological role, works with phosphate acetyltransferase (pta) to capture exogenous propionate and regenerate propionyl-CoA during degradation of 1,2-propanediol (1,2-PD). The sequence is that of Propionate kinase from Klebsiella pneumoniae subsp. pneumoniae (strain ATCC 700721 / MGH 78578).